The primary structure comprises 439 residues: MHDIRWIRDNPEAFDAALGRRGLEPQAAALIALDEKRRGAIAAFEQAQARRNAASKEIGEAKKAKENARADALMAEVGELKTKLPEMDAAAKRLEEDLRKELAQIPNLPLAEVPEGADEHGNVQHHVYGEPRSYAFKPKEHVALGEGLGFMDFERAAKLSGARFVVLKSGLARLERAIGQFFLDVHTGEHGYTEVNPPLLVRDDAMFGTAQLPKFREDQFAAGSLDAEGQGYWLIPTAEVPLTNLVRESILDEKELPMRLTALTPCFRAEAGAAGRDTRGMIRQHQFTKVELVSITTPDESRNEHERMLSCAEEVLKRLGLHYRVMTLCTGDMGFASQKTYDIEVWMPGQISSQGEGGMYREISSCSVCGDFQARRMDARYRGPDNKPHFVHTLNGSGTAVGRALIAVMETYQQEDGSIAVPDVLQPYMGGLKVIERDR.

Threonine 237–glutamate 239 contributes to the L-serine binding site. Residue arginine 268–glutamate 270 participates in ATP binding. Glutamate 291 contributes to the L-serine binding site. An ATP-binding site is contributed by glutamate 362–serine 365. Position 397 (serine 397) interacts with L-serine.

This sequence belongs to the class-II aminoacyl-tRNA synthetase family. Type-1 seryl-tRNA synthetase subfamily. As to quaternary structure, homodimer. The tRNA molecule binds across the dimer.

The protein localises to the cytoplasm. The enzyme catalyses tRNA(Ser) + L-serine + ATP = L-seryl-tRNA(Ser) + AMP + diphosphate + H(+). It carries out the reaction tRNA(Sec) + L-serine + ATP = L-seryl-tRNA(Sec) + AMP + diphosphate + H(+). It participates in aminoacyl-tRNA biosynthesis; selenocysteinyl-tRNA(Sec) biosynthesis; L-seryl-tRNA(Sec) from L-serine and tRNA(Sec): step 1/1. Its function is as follows. Catalyzes the attachment of serine to tRNA(Ser). Is also able to aminoacylate tRNA(Sec) with serine, to form the misacylated tRNA L-seryl-tRNA(Sec), which will be further converted into selenocysteinyl-tRNA(Sec). The polypeptide is Serine--tRNA ligase (Afipia carboxidovorans (strain ATCC 49405 / DSM 1227 / KCTC 32145 / OM5) (Oligotropha carboxidovorans)).